Reading from the N-terminus, the 251-residue chain is MVDDSQDTTHFGFQTVAKAQKADMVAHVFHSVAAKYDVMNDLMSFGIHRLWKRFTIDCSGVRRGQTVLDLAGGTGDLTAKFSRMVGDTGRVVLADINDSMLKMGREKLRNIGVVGNVEYVQANAEALPFPDNTFDCITISFGLRNVTDKEKALRSMYRVLKPGGRLLVLEFSKPIIEPLSKAYDAYSFHVLPRIGEMVANDGESYRYLAESIRMHPDQDTLKAMMQDAGLENVEYFNLTAGVVALHRGYKF.

S-adenosyl-L-methionine-binding positions include Thr-74, Asp-95, 123–124, and Ser-140; that span reads NA.

Belongs to the class I-like SAM-binding methyltransferase superfamily. MenG/UbiE family.

The enzyme catalyses a 2-demethylmenaquinol + S-adenosyl-L-methionine = a menaquinol + S-adenosyl-L-homocysteine + H(+). It catalyses the reaction a 2-methoxy-6-(all-trans-polyprenyl)benzene-1,4-diol + S-adenosyl-L-methionine = a 5-methoxy-2-methyl-3-(all-trans-polyprenyl)benzene-1,4-diol + S-adenosyl-L-homocysteine + H(+). Its pathway is quinol/quinone metabolism; menaquinone biosynthesis; menaquinol from 1,4-dihydroxy-2-naphthoate: step 2/2. It functions in the pathway cofactor biosynthesis; ubiquinone biosynthesis. Its function is as follows. Methyltransferase required for the conversion of demethylmenaquinol (DMKH2) to menaquinol (MKH2) and the conversion of 2-polyprenyl-6-methoxy-1,4-benzoquinol (DDMQH2) to 2-polyprenyl-3-methyl-6-methoxy-1,4-benzoquinol (DMQH2). The chain is Ubiquinone/menaquinone biosynthesis C-methyltransferase UbiE from Enterobacter sp. (strain 638).